Reading from the N-terminus, the 160-residue chain is Large ribosomal subunit protein eL21 (160 aa).

Belongs to the eukaryotic ribosomal protein eL21 family.

The sequence is that of Large ribosomal subunit protein eL21 (rpl21) from Dictyostelium discoideum (Social amoeba).